We begin with the raw amino-acid sequence, 106 residues long: ER membrane protein complex subunit 5 (106 aa).

Topologically, residues 1-12 (MESSTINAKKIS) are cytoplasmic. Residues 13–33 (VLLTLFSIIGYTAYSAHESIL) form a helical membrane-spanning segment. Topologically, residues 34–46 (EIRQDGKLPLDIK) are lumenal. A helical transmembrane segment spans residues 47–67 (CEVILVTLLFTFTTVIIASPL). Residues 68–106 (RSIQLNKWSHQRSDLAFLNSRTNFLRIKELKEKIEKVKN) lie on the Cytoplasmic side of the membrane.

Belongs to the membrane magnesium transporter (TC 1.A.67) family. Component of the ER membrane protein complex (EMC).

The protein localises to the endoplasmic reticulum membrane. Functionally, the EMC seems to be required for efficient folding of proteins in the endoplasmic reticulum (ER). This is ER membrane protein complex subunit 5 (emc5) from Schizosaccharomyces pombe (strain 972 / ATCC 24843) (Fission yeast).